A 225-amino-acid polypeptide reads, in one-letter code: UPF0725 protein At5g63820 (225 aa).

Belongs to the UPF0725 (EMB2204) family.

This is UPF0725 protein At5g63820 from Arabidopsis thaliana (Mouse-ear cress).